Here is a 65-residue protein sequence, read N- to C-terminus: MFITNILLKKAKSKNILVLMESAVSGHQFTMIRERLADKLELQRFDPYIQKMCLYRERKRLRSLN.

The protein belongs to the bacterial ribosomal protein bL33 family. In terms of assembly, component of the mitochondrial ribosome large subunit (39S) which comprises a 16S rRNA and about 50 distinct proteins.

The protein resides in the mitochondrion. In Anopheles gambiae (African malaria mosquito), this protein is Large ribosomal subunit protein bL33m (mRpL33).